The primary structure comprises 476 residues: Aspartyl/glutamyl-tRNA(Asn/Gln) amidotransferase subunit B (476 aa).

The protein belongs to the GatB/GatE family. GatB subfamily. In terms of assembly, heterotrimer of A, B and C subunits.

It carries out the reaction L-glutamyl-tRNA(Gln) + L-glutamine + ATP + H2O = L-glutaminyl-tRNA(Gln) + L-glutamate + ADP + phosphate + H(+). The enzyme catalyses L-aspartyl-tRNA(Asn) + L-glutamine + ATP + H2O = L-asparaginyl-tRNA(Asn) + L-glutamate + ADP + phosphate + 2 H(+). Allows the formation of correctly charged Asn-tRNA(Asn) or Gln-tRNA(Gln) through the transamidation of misacylated Asp-tRNA(Asn) or Glu-tRNA(Gln) in organisms which lack either or both of asparaginyl-tRNA or glutaminyl-tRNA synthetases. The reaction takes place in the presence of glutamine and ATP through an activated phospho-Asp-tRNA(Asn) or phospho-Glu-tRNA(Gln). The polypeptide is Aspartyl/glutamyl-tRNA(Asn/Gln) amidotransferase subunit B (Oceanobacillus iheyensis (strain DSM 14371 / CIP 107618 / JCM 11309 / KCTC 3954 / HTE831)).